The chain runs to 303 residues: Lipase chaperone (303 aa).

Residues 7-23 (TLAAACAAWLAWWAWPD) form a helical membrane-spanning segment.

The protein belongs to the lipase chaperone family.

It is found in the cell inner membrane. Functionally, may be involved in the folding of the extracellular lipase during its passage through the periplasm. The sequence is that of Lipase chaperone (lifO) from Chromobacterium violaceum (strain ATCC 12472 / DSM 30191 / JCM 1249 / CCUG 213 / NBRC 12614 / NCIMB 9131 / NCTC 9757 / MK).